A 493-amino-acid polypeptide reads, in one-letter code: ATP synthase subunit beta 3 (493 aa).

Positions 113-138 are disordered; the sequence is VPGDNGTPLPPGTPRRPIHRKPPPLA. ATP is bound at residue 170–177; sequence GGAGVGKT.

This sequence belongs to the ATPase alpha/beta chains family. F-type ATPases have 2 components, CF(1) - the catalytic core - and CF(0) - the membrane proton channel. CF(1) has five subunits: alpha(3), beta(3), gamma(1), delta(1), epsilon(1). CF(0) has three main subunits: a(1), b(2) and c(9-12). The alpha and beta chains form an alternating ring which encloses part of the gamma chain. CF(1) is attached to CF(0) by a central stalk formed by the gamma and epsilon chains, while a peripheral stalk is formed by the delta and b chains.

The protein resides in the cell inner membrane. The catalysed reaction is ATP + H2O + 4 H(+)(in) = ADP + phosphate + 5 H(+)(out). Produces ATP from ADP in the presence of a proton gradient across the membrane. The catalytic sites are hosted primarily by the beta subunits. The chain is ATP synthase subunit beta 3 from Paraburkholderia xenovorans (strain LB400).